The following is a 362-amino-acid chain: Phosphoserine aminotransferase (362 aa).

L-glutamate is bound at residue R43. Pyridoxal 5'-phosphate is bound by residues 77–78, W103, T153, D173, and Q196; that span reads AT. An N6-(pyridoxal phosphate)lysine modification is found at K197. 238-239 is a pyridoxal 5'-phosphate binding site; it reads NT.

This sequence belongs to the class-V pyridoxal-phosphate-dependent aminotransferase family. SerC subfamily. As to quaternary structure, homodimer. The cofactor is pyridoxal 5'-phosphate.

It localises to the cytoplasm. It catalyses the reaction O-phospho-L-serine + 2-oxoglutarate = 3-phosphooxypyruvate + L-glutamate. The catalysed reaction is 4-(phosphooxy)-L-threonine + 2-oxoglutarate = (R)-3-hydroxy-2-oxo-4-phosphooxybutanoate + L-glutamate. Its pathway is amino-acid biosynthesis; L-serine biosynthesis; L-serine from 3-phospho-D-glycerate: step 2/3. It participates in cofactor biosynthesis; pyridoxine 5'-phosphate biosynthesis; pyridoxine 5'-phosphate from D-erythrose 4-phosphate: step 3/5. Catalyzes the reversible conversion of 3-phosphohydroxypyruvate to phosphoserine and of 3-hydroxy-2-oxo-4-phosphonooxybutanoate to phosphohydroxythreonine. This chain is Phosphoserine aminotransferase, found in Acidithiobacillus ferrooxidans (strain ATCC 23270 / DSM 14882 / CIP 104768 / NCIMB 8455) (Ferrobacillus ferrooxidans (strain ATCC 23270)).